A 1076-amino-acid chain; its full sequence is Carbamoyl phosphate synthase large chain (1076 aa).

Positions 1–403 (MPKRTDIQSI…SLQKALRGLE (403 aa)) are carboxyphosphate synthetic domain. 12 residues coordinate ATP: R129, R169, G175, G176, E208, L210, E215, G241, I242, H243, Q285, and E299. The ATP-grasp 1 domain occupies 133 to 328 (DKAMKSIGLE…IAKVAAKLAV (196 aa)). Q285, E299, and N301 together coordinate Mg(2+). Positions 285, 299, and 301 each coordinate Mn(2+). The segment at 404 to 553 (VGAAGLDEKV…YSTYDEECEA (150 aa)) is oligomerization domain. The carbamoyl phosphate synthetic domain stretch occupies residues 554–935 (NPTDKDKIMV…AYAKAELGCG (382 aa)). One can recognise an ATP-grasp 2 domain in the interval 678-869 (QQAVQRLGLK…LAKIAARVMV (192 aa)). R714, R753, L755, E760, G785, V786, H787, S788, Q828, and E840 together coordinate ATP. Mg(2+) is bound by residues Q828, E840, and N842. Positions 828, 840, and 842 each coordinate Mn(2+). Residues 936 to 1076 (SVYPEGGRAL…LHARVKANQA (141 aa)) enclose the MGS-like domain. The allosteric domain stretch occupies residues 936-1076 (SVYPEGGRAL…LHARVKANQA (141 aa)).

Belongs to the CarB family. Composed of two chains; the small (or glutamine) chain promotes the hydrolysis of glutamine to ammonia, which is used by the large (or ammonia) chain to synthesize carbamoyl phosphate. Tetramer of heterodimers (alpha,beta)4. It depends on Mg(2+) as a cofactor. Requires Mn(2+) as cofactor.

It carries out the reaction hydrogencarbonate + L-glutamine + 2 ATP + H2O = carbamoyl phosphate + L-glutamate + 2 ADP + phosphate + 2 H(+). The catalysed reaction is hydrogencarbonate + NH4(+) + 2 ATP = carbamoyl phosphate + 2 ADP + phosphate + 2 H(+). The protein operates within amino-acid biosynthesis; L-arginine biosynthesis; carbamoyl phosphate from bicarbonate: step 1/1. It functions in the pathway pyrimidine metabolism; UMP biosynthesis via de novo pathway; (S)-dihydroorotate from bicarbonate: step 1/3. Large subunit of the glutamine-dependent carbamoyl phosphate synthetase (CPSase). CPSase catalyzes the formation of carbamoyl phosphate from the ammonia moiety of glutamine, carbonate, and phosphate donated by ATP, constituting the first step of 2 biosynthetic pathways, one leading to arginine and/or urea and the other to pyrimidine nucleotides. The large subunit (synthetase) binds the substrates ammonia (free or transferred from glutamine from the small subunit), hydrogencarbonate and ATP and carries out an ATP-coupled ligase reaction, activating hydrogencarbonate by forming carboxy phosphate which reacts with ammonia to form carbamoyl phosphate. This Vibrio cholerae serotype O1 (strain ATCC 39315 / El Tor Inaba N16961) protein is Carbamoyl phosphate synthase large chain.